The following is a 278-amino-acid chain: Prohibitin-7, mitochondrial (278 aa).

Residues 1–14 (MNVKKVPNVPGSPA) are Mitochondrial matrix-facing. Residues 15–37 (LSALLKLGVIGGLGLYCIGSSMY) form a helical; Signal-anchor for type II membrane protein membrane-spanning segment. Topologically, residues 38–278 (NVDGGHRAIV…NSSDLLISKQ (241 aa)) are mitochondrial intermembrane. Residues 186–220 (KEFTEAIEKKQVAAQEAERAKFIVEKAEQDKKSAI) adopt a coiled-coil conformation.

Belongs to the prohibitin family. As to quaternary structure, component of a prohibitin multimeric complex in mitochondrial membranes.

It localises to the mitochondrion inner membrane. In terms of biological role, prohibitin probably acts as a holdase/unfoldase for the stabilization of newly synthesized mitochondrial proteins. This chain is Prohibitin-7, mitochondrial (PHB7), found in Arabidopsis thaliana (Mouse-ear cress).